A 332-amino-acid chain; its full sequence is D-amino acid oxidase (332 aa).

A8, G9, I10, T39, T40, A45, G46, L47, V161, and S180 together coordinate FAD. 2 residues coordinate D-proline: Y218 and R274. Residues Y218 and R274 each contribute to the D-serine site. FAD is bound by residues R274, G305, G306, G308, and T310. A D-proline-binding site is contributed by G306. A D-serine-binding site is contributed by G306. The Microbody targeting signal motif lies at 330 to 332 (AKL).

It belongs to the DAMOX/DASOX family. FAD is required as a cofactor.

Its subcellular location is the peroxisome matrix. It carries out the reaction a D-alpha-amino acid + O2 + H2O = a 2-oxocarboxylate + H2O2 + NH4(+). The enzyme catalyses D-alanine + O2 + H2O = pyruvate + H2O2 + NH4(+). It catalyses the reaction D-arginine + O2 + H2O = 5-guanidino-2-oxopentanoate + H2O2 + NH4(+). The catalysed reaction is D-asparagine + O2 + H2O = 2-oxosuccinamate + H2O2 + NH4(+). It carries out the reaction D-cysteine + O2 + H2O = 2-oxo-3-sulfanylpropanoate + H2O2 + NH4(+). The enzyme catalyses D-glutamine + O2 + H2O = 2-oxoglutaramate + H2O2 + NH4(+). It catalyses the reaction D-isoleucine + O2 + H2O = (R)-3-methyl-2-oxopentanoate + H2O2 + NH4(+). The catalysed reaction is D-leucine + O2 + H2O = 4-methyl-2-oxopentanoate + H2O2 + NH4(+). It carries out the reaction D-lysine + O2 + H2O = 6-amino-2-oxohexanoate + H2O2 + NH4(+). The enzyme catalyses D-methionine + O2 + H2O = 4-methylsulfanyl-2-oxobutanoate + H2O2 + NH4(+). It catalyses the reaction D-phenylalanine + O2 + H2O = 3-phenylpyruvate + H2O2 + NH4(+). The catalysed reaction is D-proline + O2 = 1-pyrroline-2-carboxylate + H2O2. It carries out the reaction D-valine + O2 + H2O = 3-methyl-2-oxobutanoate + H2O2 + NH4(+). The enzyme catalyses D-histidine + O2 + H2O = 3-(imidazol-5-yl)pyruvate + H2O2 + NH4(+). It catalyses the reaction D-tyrosine + O2 + H2O = 3-(4-hydroxyphenyl)pyruvate + H2O2 + NH4(+). The catalysed reaction is D-serine + O2 + H2O = 3-hydroxypyruvate + H2O2 + NH4(+). It carries out the reaction D-threonine + O2 + H2O = (S)-3-hydroxy-2-oxobutanoate + H2O2 + NH4(+). The enzyme catalyses D-tryptophan + O2 + H2O = indole-3-pyruvate + H2O2 + NH4(+). Functionally, catalyzes the oxidative deamination of D-amino acids with broad substrate specificity. Could be responsible for the degradation of diet-derived D-alanine in the intestine. Maintains the asexual state of worms and represses early ovarian development. Following sexual induction, the enzyme is required for differentiation of oogonia into oocytes in the developing ovaries. In Dugesia ryukyuensis (Freshwater planarian flatworm), this protein is D-amino acid oxidase.